We begin with the raw amino-acid sequence, 219 residues long: Ribose-5-phosphate isomerase A (219 aa).

Substrate-binding positions include 28 to 31 (TGST), 81 to 84 (DGAD), and 94 to 97 (KGGG). The Proton acceptor role is filled by glutamate 103. A substrate-binding site is contributed by lysine 121.

The protein belongs to the ribose 5-phosphate isomerase family. As to quaternary structure, homodimer.

It catalyses the reaction aldehydo-D-ribose 5-phosphate = D-ribulose 5-phosphate. Its pathway is carbohydrate degradation; pentose phosphate pathway; D-ribose 5-phosphate from D-ribulose 5-phosphate (non-oxidative stage): step 1/1. In terms of biological role, catalyzes the reversible conversion of ribose-5-phosphate to ribulose 5-phosphate. The chain is Ribose-5-phosphate isomerase A from Salmonella arizonae (strain ATCC BAA-731 / CDC346-86 / RSK2980).